The following is a 334-amino-acid chain: Trans-1,2-dihydrobenzene-1,2-diol dehydrogenase (334 aa).

This sequence belongs to the Gfo/Idh/MocA family. In terms of assembly, homodimer.

It catalyses the reaction (1R,2R)-1,2-dihydrobenzene-1,2-diol + NADP(+) = catechol + NADPH + H(+). The enzyme catalyses D-xylose + NADP(+) = D-xylono-1,5-lactone + NADPH + H(+). This Danio rerio (Zebrafish) protein is Trans-1,2-dihydrobenzene-1,2-diol dehydrogenase (dhdh).